The sequence spans 369 residues: Anhydro-N-acetylmuramic acid kinase (369 aa).

Gly-12 to Asp-19 contributes to the ATP binding site.

It belongs to the anhydro-N-acetylmuramic acid kinase family.

It catalyses the reaction 1,6-anhydro-N-acetyl-beta-muramate + ATP + H2O = N-acetyl-D-muramate 6-phosphate + ADP + H(+). It functions in the pathway amino-sugar metabolism; 1,6-anhydro-N-acetylmuramate degradation. Its pathway is cell wall biogenesis; peptidoglycan recycling. In terms of biological role, catalyzes the specific phosphorylation of 1,6-anhydro-N-acetylmuramic acid (anhMurNAc) with the simultaneous cleavage of the 1,6-anhydro ring, generating MurNAc-6-P. Is required for the utilization of anhMurNAc either imported from the medium or derived from its own cell wall murein, and thus plays a role in cell wall recycling. This Shewanella baltica (strain OS223) protein is Anhydro-N-acetylmuramic acid kinase.